Consider the following 366-residue polypeptide: UDP-N-acetylglucosamine--N-acetylmuramyl-(pentapeptide) pyrophosphoryl-undecaprenol N-acetylglucosamine transferase (366 aa).

UDP-N-acetyl-alpha-D-glucosamine-binding positions include 10 to 12 (TGG), N124, S195, and Q295.

It belongs to the glycosyltransferase 28 family. MurG subfamily.

It localises to the cell membrane. The enzyme catalyses di-trans,octa-cis-undecaprenyl diphospho-N-acetyl-alpha-D-muramoyl-L-alanyl-D-glutamyl-meso-2,6-diaminopimeloyl-D-alanyl-D-alanine + UDP-N-acetyl-alpha-D-glucosamine = di-trans,octa-cis-undecaprenyl diphospho-[N-acetyl-alpha-D-glucosaminyl-(1-&gt;4)]-N-acetyl-alpha-D-muramoyl-L-alanyl-D-glutamyl-meso-2,6-diaminopimeloyl-D-alanyl-D-alanine + UDP + H(+). Its pathway is cell wall biogenesis; peptidoglycan biosynthesis. Cell wall formation. Catalyzes the transfer of a GlcNAc subunit on undecaprenyl-pyrophosphoryl-MurNAc-pentapeptide (lipid intermediate I) to form undecaprenyl-pyrophosphoryl-MurNAc-(pentapeptide)GlcNAc (lipid intermediate II). This chain is UDP-N-acetylglucosamine--N-acetylmuramyl-(pentapeptide) pyrophosphoryl-undecaprenol N-acetylglucosamine transferase, found in Bacillus licheniformis (strain ATCC 14580 / DSM 13 / JCM 2505 / CCUG 7422 / NBRC 12200 / NCIMB 9375 / NCTC 10341 / NRRL NRS-1264 / Gibson 46).